A 387-amino-acid chain; its full sequence is 8-amino-7-oxononanoate synthase (387 aa).

Residue arginine 20 participates in substrate binding. 107–108 is a binding site for pyridoxal 5'-phosphate; sequence GY. Histidine 132 is a substrate binding site. The pyridoxal 5'-phosphate site is built by serine 181, histidine 209, and threonine 238. Residue lysine 241 is modified to N6-(pyridoxal phosphate)lysine. Residue threonine 355 coordinates substrate.

It belongs to the class-II pyridoxal-phosphate-dependent aminotransferase family. BioF subfamily. As to quaternary structure, homodimer. Pyridoxal 5'-phosphate is required as a cofactor.

The enzyme catalyses 6-carboxyhexanoyl-[ACP] + L-alanine + H(+) = (8S)-8-amino-7-oxononanoate + holo-[ACP] + CO2. It functions in the pathway cofactor biosynthesis; biotin biosynthesis. Its function is as follows. Catalyzes the decarboxylative condensation of pimeloyl-[acyl-carrier protein] and L-alanine to produce 8-amino-7-oxononanoate (AON), [acyl-carrier protein], and carbon dioxide. The polypeptide is 8-amino-7-oxononanoate synthase (Dechloromonas aromatica (strain RCB)).